We begin with the raw amino-acid sequence, 340 residues long: Phenylalanine--tRNA ligase alpha subunit (340 aa).

Glu255 serves as a coordination point for Mg(2+).

Belongs to the class-II aminoacyl-tRNA synthetase family. Phe-tRNA synthetase alpha subunit type 1 subfamily. As to quaternary structure, tetramer of two alpha and two beta subunits. Mg(2+) is required as a cofactor.

The protein resides in the cytoplasm. It catalyses the reaction tRNA(Phe) + L-phenylalanine + ATP = L-phenylalanyl-tRNA(Phe) + AMP + diphosphate + H(+). The polypeptide is Phenylalanine--tRNA ligase alpha subunit (Desulfitobacterium hafniense (strain Y51)).